The sequence spans 267 residues: 2-keto-3-deoxy-L-rhamnonate aldolase (267 aa).

His49 functions as the Proton acceptor in the catalytic mechanism. Gln151 provides a ligand contact to substrate. Glu153 contacts Mg(2+). Substrate-binding residues include Ala178 and Asp179. Asp179 is a binding site for Mg(2+).

It belongs to the HpcH/HpaI aldolase family. KDR aldolase subfamily. As to quaternary structure, homohexamer. Requires Mg(2+) as cofactor.

It catalyses the reaction 2-dehydro-3-deoxy-L-rhamnonate = (S)-lactaldehyde + pyruvate. Its function is as follows. Catalyzes the reversible retro-aldol cleavage of 2-keto-3-deoxy-L-rhamnonate (KDR) to pyruvate and lactaldehyde. The chain is 2-keto-3-deoxy-L-rhamnonate aldolase from Shigella dysenteriae serotype 1 (strain Sd197).